We begin with the raw amino-acid sequence, 334 residues long: MSLLCYNRGCGQRYDPEGNSDDSCTYHPGVPVFHDALKGWSCCKRRTTDFSDFLSIVGCTKGQHNNEKPPEPVKPEVKITSDKKELADFKPKFNELIIQAPKPIECINRPSSDEPMAKLQLKISASLKQALDKLKLSENDKTVTDESGEIKIGTSCKNGGCLKTFAGPQSNEEVCHYHSGVPIFHEGMKYWSCCRRKTSDFNTFLSLEGCTKGTHLWTKKDDGKKVVPCRHDWHQTGAGVTISIYAKNSMPELSYVEANSTVVNIQVVFEGEKTFQQNVQLWGVIDVAKSYVSLTATKVEVFLKKAEFMTWARLELPQKAPAPSEQNETPEEQE.

Cys5, Cys10, Cys24, His27, Cys42, Cys43, Cys59, His64, Cys156, Cys161, Cys175, His178, Cys193, Cys194, Cys210, and His215 together coordinate Zn(2+). 2 CHORD domains span residues Cys5 to His64 and Cys156 to His215. The CS domain maps to Val226–Glu315.

Its function is as follows. Regulates centrosome duplication. This Xenopus laevis (African clawed frog) protein is Cysteine and histidine-rich domain-containing protein 1 (chordc1).